Here is a 355-residue protein sequence, read N- to C-terminus: Erythronate-4-phosphate dehydrogenase (355 aa).

2 residues coordinate substrate: S45 and T66. NAD(+) is bound at residue D146. The active site involves R206. Residue D229 coordinates NAD(+). E234 is an active-site residue. Residue H251 is the Proton donor of the active site. G254 is an NAD(+) binding site. Substrate is bound at residue Y255.

The protein belongs to the D-isomer specific 2-hydroxyacid dehydrogenase family. PdxB subfamily. In terms of assembly, homodimer.

It is found in the cytoplasm. The enzyme catalyses 4-phospho-D-erythronate + NAD(+) = (R)-3-hydroxy-2-oxo-4-phosphooxybutanoate + NADH + H(+). It participates in cofactor biosynthesis; pyridoxine 5'-phosphate biosynthesis; pyridoxine 5'-phosphate from D-erythrose 4-phosphate: step 2/5. Its function is as follows. Catalyzes the oxidation of erythronate-4-phosphate to 3-hydroxy-2-oxo-4-phosphonooxybutanoate. This Acinetobacter baumannii (strain SDF) protein is Erythronate-4-phosphate dehydrogenase.